Consider the following 94-residue polypeptide: Cytochrome c-551 (94 aa).

The signal sequence occupies residues 1–14 (MAFTAMTVAPSALA). Heme c contacts are provided by C24, C27, H28, and M73.

Binds 1 heme c group covalently per subunit.

Efficiently couple electron transfer between the cytochrome bc1 complex and the photosynthetic reaction center. The polypeptide is Cytochrome c-551 (Allochromatium vinosum (strain ATCC 17899 / DSM 180 / NBRC 103801 / NCIMB 10441 / D) (Chromatium vinosum)).